Here is a 715-residue protein sequence, read N- to C-terminus: Fatty acid oxidation complex subunit alpha (715 aa).

The segment at 1–190 (MIYEGKAITV…KVGAVDAVVA (190 aa)) is enoyl-CoA hydratase/isomerase. Aspartate 297 lines the substrate pocket. The segment at 312–715 (HDVKQAAVLG…MAKNGQRFFN (404 aa)) is 3-hydroxyacyl-CoA dehydrogenase. NAD(+)-binding positions include methionine 325, aspartate 344, 401–403 (VVE), lysine 408, and serine 430. Histidine 451 serves as the catalytic For 3-hydroxyacyl-CoA dehydrogenase activity. Asparagine 454 is a binding site for NAD(+). Positions 501 and 660 each coordinate substrate.

This sequence in the N-terminal section; belongs to the enoyl-CoA hydratase/isomerase family. It in the C-terminal section; belongs to the 3-hydroxyacyl-CoA dehydrogenase family. In terms of assembly, heterotetramer of two alpha chains (FadB) and two beta chains (FadA).

The enzyme catalyses a (3S)-3-hydroxyacyl-CoA + NAD(+) = a 3-oxoacyl-CoA + NADH + H(+). It carries out the reaction a (3S)-3-hydroxyacyl-CoA = a (2E)-enoyl-CoA + H2O. It catalyses the reaction a 4-saturated-(3S)-3-hydroxyacyl-CoA = a (3E)-enoyl-CoA + H2O. The catalysed reaction is (3S)-3-hydroxybutanoyl-CoA = (3R)-3-hydroxybutanoyl-CoA. The enzyme catalyses a (3Z)-enoyl-CoA = a 4-saturated (2E)-enoyl-CoA. It carries out the reaction a (3E)-enoyl-CoA = a 4-saturated (2E)-enoyl-CoA. It functions in the pathway lipid metabolism; fatty acid beta-oxidation. Involved in the aerobic and anaerobic degradation of long-chain fatty acids via beta-oxidation cycle. Catalyzes the formation of 3-oxoacyl-CoA from enoyl-CoA via L-3-hydroxyacyl-CoA. It can also use D-3-hydroxyacyl-CoA and cis-3-enoyl-CoA as substrate. The protein is Fatty acid oxidation complex subunit alpha of Pseudomonas entomophila (strain L48).